The chain runs to 469 residues: Chromosomal replication initiator protein DnaA (469 aa).

The segment at 1–71 (MKEFWQTCVS…EALAAEWYQR (71 aa)) is domain I, interacts with DnaA modulators. Positions 71–131 (RPVQVTFELP…DAANIVYERS (61 aa)) are domain II. A domain III, AAA+ region region spans residues 132–348 (RLNTDLTFEN…GALRKVLAYA (217 aa)). Residues glycine 176, glycine 178, lysine 179, and threonine 180 each contribute to the ATP site. Residues 349-469 (RFHGRDVLTV…LHVLEQTLKG (121 aa)) are domain IV, binds dsDNA.

Belongs to the DnaA family. In terms of assembly, oligomerizes as a right-handed, spiral filament on DNA at oriC.

It localises to the cytoplasm. Plays an essential role in the initiation and regulation of chromosomal replication. ATP-DnaA binds to the origin of replication (oriC) to initiate formation of the DNA replication initiation complex once per cell cycle. Binds the DnaA box (a 9 base pair repeat at the origin) and separates the double-stranded (ds)DNA. Forms a right-handed helical filament on oriC DNA; dsDNA binds to the exterior of the filament while single-stranded (ss)DNA is stabiized in the filament's interior. The ATP-DnaA-oriC complex binds and stabilizes one strand of the AT-rich DNA unwinding element (DUE), permitting loading of DNA polymerase. After initiation quickly degrades to an ADP-DnaA complex that is not apt for DNA replication. Binds acidic phospholipids. The polypeptide is Chromosomal replication initiator protein DnaA (Bordetella parapertussis (strain 12822 / ATCC BAA-587 / NCTC 13253)).